A 556-amino-acid polypeptide reads, in one-letter code: Formate--tetrahydrofolate ligase 1 (556 aa).

Position 65–72 (T65–S72) interacts with ATP.

The protein belongs to the formate--tetrahydrofolate ligase family.

The catalysed reaction is (6S)-5,6,7,8-tetrahydrofolate + formate + ATP = (6R)-10-formyltetrahydrofolate + ADP + phosphate. Its pathway is one-carbon metabolism; tetrahydrofolate interconversion. The polypeptide is Formate--tetrahydrofolate ligase 1 (Streptococcus pyogenes serotype M18 (strain MGAS8232)).